The primary structure comprises 92 residues: Small ribosomal subunit protein uS19 (92 aa).

This sequence belongs to the universal ribosomal protein uS19 family.

Functionally, protein S19 forms a complex with S13 that binds strongly to the 16S ribosomal RNA. The chain is Small ribosomal subunit protein uS19 from Methylobacterium sp. (strain 4-46).